The primary structure comprises 44 residues: Iota-conotoxin-like R11.11 (44 aa).

4 disulfides stabilise this stretch: Cys-5/Cys-19, Cys-12/Cys-22, Cys-18/Cys-27, and Cys-21/Cys-36. Residue Arg-44 is a propeptide, removed by a carboxypeptidase.

Belongs to the conotoxin I1 superfamily. Expressed by the venom duct.

The protein localises to the secreted. Its function is as follows. Iota-conotoxins bind to voltage-gated sodium channels (Nav) and act as agonists by shifting the voltage-dependence of activation to more hyperpolarized levels. Produces general excitatory symptoms. The chain is Iota-conotoxin-like R11.11 from Conus radiatus (Rayed cone).